The primary structure comprises 176 residues: Nudix hydrolase 18, mitochondrial (176 aa).

Residues 1-21 (MVCLVSRTGRQSQRYNKGRRQ) constitute a mitochondrion transit peptide. Residues 22–153 (VVGCIPYRLK…WMKEALDVLV (132 aa)) form the Nudix hydrolase domain. A Nudix box motif is present at residues 60–81 (GGWELDESVEEAASRESLEEAG). Residues glutamate 75 and glutamate 79 each contribute to the Mg(2+) site.

Belongs to the Nudix hydrolase family. The cofactor is Mg(2+). Mn(2+) is required as a cofactor. As to expression, expressed in roots, stems and inflorescences.

The protein resides in the mitochondrion. In terms of biological role, probably mediates the hydrolysis of some nucleoside diphosphate derivatives. In Arabidopsis thaliana (Mouse-ear cress), this protein is Nudix hydrolase 18, mitochondrial (NUDT18).